The chain runs to 171 residues: O-acetyl-ADP-ribose deacetylase 2 (171 aa).

The region spanning 1–171 (MNKITVIQGD…NYDLYLKLLN (171 aa)) is the Macro domain. Substrate is bound by residues 10-11 (DI), asparagine 24, 32-34 (GVD), and 121-125 (STGIY). Catalysis depends on aspartate 34, which acts as the Proton acceptor.

The protein belongs to the MacroD-type family. YmdB subfamily. In terms of assembly, homodimer. Interacts with RNase III.

It carries out the reaction 3''-O-acetyl-ADP-D-ribose + H2O = ADP-D-ribose + acetate + H(+). The enzyme catalyses 2''-O-acetyl-ADP-D-ribose + H2O = ADP-D-ribose + acetate + H(+). In terms of biological role, deacetylates O-acetyl-ADP ribose to yield ADP-ribose and free acetate. Down-regulates ribonuclease 3 (RNase III) activity. Acts by interacting directly with the region of the ribonuclease that is required for dimerization/activation. In Pantoea vagans (strain C9-1) (Pantoea agglomerans (strain C9-1)), this protein is O-acetyl-ADP-ribose deacetylase 2.